The following is a 200-amino-acid chain: Somatotropin (200 aa).

Residues 1–22 form the signal peptide; that stretch reads MARVLVLLSVVVASLLFSQGAT. A Zn(2+)-binding site is contributed by His38. Cysteines 71 and 173 form a disulfide. Residue Glu182 coordinates Zn(2+). Residues Cys190 and Cys198 are joined by a disulfide bond.

Belongs to the somatotropin/prolactin family.

The protein localises to the secreted. Its function is as follows. Growth hormone plays an important role in growth control and is involved in the regulation of several anabolic processes. Implicated as an osmoregulatory substance important for seawater adaptation. In Ictalurus punctatus (Channel catfish), this protein is Somatotropin (gh).